A 1295-amino-acid chain; its full sequence is DNA-directed RNA polymerase subunit beta' (1295 aa).

Positions 60, 62, 75, and 78 each coordinate Zn(2+). Aspartate 516, aspartate 518, and aspartate 520 together coordinate Mg(2+). Residues cysteine 841, cysteine 914, cysteine 921, and cysteine 924 each coordinate Zn(2+).

Belongs to the RNA polymerase beta' chain family. In terms of assembly, the RNAP catalytic core consists of 2 alpha, 1 beta, 1 beta' and 1 omega subunit. When a sigma factor is associated with the core the holoenzyme is formed, which can initiate transcription. Mg(2+) is required as a cofactor. It depends on Zn(2+) as a cofactor.

It catalyses the reaction RNA(n) + a ribonucleoside 5'-triphosphate = RNA(n+1) + diphosphate. Functionally, DNA-dependent RNA polymerase catalyzes the transcription of DNA into RNA using the four ribonucleoside triphosphates as substrates. The protein is DNA-directed RNA polymerase subunit beta' of Dehalococcoides mccartyi (strain CBDB1).